The following is a 592-amino-acid chain: Aspartate--tRNA ligase (592 aa).

Glutamate 180 serves as a coordination point for L-aspartate. The tract at residues 204 to 207 (QLFK) is aspartate. Arginine 226 is an L-aspartate binding site. Residues 226–228 (RDE) and glutamine 235 each bind ATP. Histidine 455 serves as a coordination point for L-aspartate. Residue glutamate 489 participates in ATP binding. Residue arginine 496 participates in L-aspartate binding. Residue 541–544 (GFDR) coordinates ATP.

The protein belongs to the class-II aminoacyl-tRNA synthetase family. Type 1 subfamily. In terms of assembly, homodimer.

Its subcellular location is the cytoplasm. The catalysed reaction is tRNA(Asp) + L-aspartate + ATP = L-aspartyl-tRNA(Asp) + AMP + diphosphate. Functionally, catalyzes the attachment of L-aspartate to tRNA(Asp) in a two-step reaction: L-aspartate is first activated by ATP to form Asp-AMP and then transferred to the acceptor end of tRNA(Asp). The sequence is that of Aspartate--tRNA ligase from Clostridium tetani (strain Massachusetts / E88).